We begin with the raw amino-acid sequence, 338 residues long: MNLAQENLNSPNNLGNNATKSPKETVILLNMGGPNSLYEVGVFLKNMFDDPFILTIKNNFMRKMVGKMIVNSRIEKSKKIYEKLGGKSPLTPITFALTERLNELDPSRFYTYAMRYTPPYASMVLQDLALKEVESLVFFSMYPQYSSTTTLSSFNDAFNALKSLETFRPKVRVIERFYASEKLNEIILNTILSTLNNHKSQDFVLIFSVHGLPKSIIDAGDTYQQECEHHVDLLKDLMRQKNIHFKQVLLSYQSKLGPMKWLEPSTEGLIEKHRKSNIIIYPLAFTIDNSETLYELEIQYRLMAARLAIKEYLVCPCLNDSIEFAKFIIELVKNLKDE.

The Fe cation site is built by H210 and E291.

It belongs to the ferrochelatase family.

The protein resides in the cytoplasm. The enzyme catalyses heme b + 2 H(+) = protoporphyrin IX + Fe(2+). It functions in the pathway porphyrin-containing compound metabolism; protoheme biosynthesis; protoheme from protoporphyrin-IX: step 1/1. Its function is as follows. Catalyzes the ferrous insertion into protoporphyrin IX. The polypeptide is Ferrochelatase (Helicobacter acinonychis (strain Sheeba)).